The sequence spans 293 residues: Probable porphobilinogen deaminase (293 aa).

An S-(dipyrrolylmethanemethyl)cysteine modification is found at C233.

The protein belongs to the HMBS family. Dipyrromethane is required as a cofactor.

It catalyses the reaction 4 porphobilinogen + H2O = hydroxymethylbilane + 4 NH4(+). It participates in porphyrin-containing compound metabolism; protoporphyrin-IX biosynthesis; coproporphyrinogen-III from 5-aminolevulinate: step 2/4. Its function is as follows. Tetrapolymerization of the monopyrrole PBG into the hydroxymethylbilane pre-uroporphyrinogen in several discrete steps. This Saccharolobus islandicus (strain Y.N.15.51 / Yellowstone #2) (Sulfolobus islandicus) protein is Probable porphobilinogen deaminase.